We begin with the raw amino-acid sequence, 649 residues long: Alpha-amylase (649 aa).

Glu-124 acts as the Nucleophile in catalysis. Asp-215 acts as the Proton donor in catalysis.

This sequence belongs to the glycosyl hydrolase 57 family. As to quaternary structure, homodimer.

It carries out the reaction Endohydrolysis of (1-&gt;4)-alpha-D-glucosidic linkages in polysaccharides containing three or more (1-&gt;4)-alpha-linked D-glucose units.. Its function is as follows. Displays a broad range of substrate specificity, with the capacity to hydrolyze carbohydrates as simple as maltotriose. The chain is Alpha-amylase (amyA) from Pyrococcus furiosus (strain ATCC 43587 / DSM 3638 / JCM 8422 / Vc1).